Consider the following 810-residue polypeptide: DNA ligase (810 aa).

NAD(+) is bound by residues 46–50, 95–96, and E129; these read DAEYD and SL. K131 acts as the N6-AMP-lysine intermediate in catalysis. Residues R152, E189, K305, and K329 each contribute to the NAD(+) site. The Zn(2+) site is built by C434, C437, C458, and C464. Residues 528 to 548 form a disordered region; the sequence is ERRAESGTAEPPKKAAKKKGD. The 80-residue stretch at 731-810 folds into the BRCT domain; sequence AAASTFAGKT…DDWLAMVAQG (80 aa).

The protein belongs to the NAD-dependent DNA ligase family. LigA subfamily. Mg(2+) is required as a cofactor. It depends on Mn(2+) as a cofactor.

The enzyme catalyses NAD(+) + (deoxyribonucleotide)n-3'-hydroxyl + 5'-phospho-(deoxyribonucleotide)m = (deoxyribonucleotide)n+m + AMP + beta-nicotinamide D-nucleotide.. DNA ligase that catalyzes the formation of phosphodiester linkages between 5'-phosphoryl and 3'-hydroxyl groups in double-stranded DNA using NAD as a coenzyme and as the energy source for the reaction. It is essential for DNA replication and repair of damaged DNA. In Methylobacterium radiotolerans (strain ATCC 27329 / DSM 1819 / JCM 2831 / NBRC 15690 / NCIMB 10815 / 0-1), this protein is DNA ligase.